The following is a 649-amino-acid chain: Echinoderm microtubule-associated protein-like 2 (649 aa).

The tandem atypical propeller in EMLs stretch occupies residues 10–649; that stretch reads KEVIFSMEEG…DTSVLQWRVA (640 aa). 12 WD repeats span residues 56–93, 97–144, 151–192, 195–234, 241–280, 285–323, 369–406, 410–447, 452–489, 495–535, 564–602, and 609–648; these read KLDW…LYSV, RQRH…VWDS, HVLG…VWDW, ESKV…FWSL, KRQG…VWGK, ITQE…LWGS, FSLL…LWSS, QPVW…LLDT, LVAI…VYTV, KVSR…YWDA, FGIW…LFSY, and ALSH…QWRV.

This sequence belongs to the WD repeat EMAP family. In terms of assembly, interacts with GRID2 and may also interact with GRID1. Interacts with EML3. Binds unpolymerized tubulins via its WD repeat region. Widely expressed in both brain and peripheral tissues, including brainstem and enrichment in the postsynaptic density, PSD.

It is found in the cytoplasm. Its subcellular location is the cytoskeleton. The protein localises to the spindle. In terms of biological role, tubulin binding protein that inhibits microtubule nucleation and growth, resulting in shorter microtubules. The sequence is that of Echinoderm microtubule-associated protein-like 2 (Eml2) from Rattus norvegicus (Rat).